The sequence spans 120 residues: Aspartate 1-decarboxylase (120 aa).

Catalysis depends on S25, which acts as the Schiff-base intermediate with substrate; via pyruvic acid. Residue S25 is modified to Pyruvic acid (Ser). T57 is a binding site for substrate. Y58 functions as the Proton donor in the catalytic mechanism. Position 73–75 (73–75 (GAA)) interacts with substrate.

This sequence belongs to the PanD family. As to quaternary structure, heterooctamer of four alpha and four beta subunits. Requires pyruvate as cofactor. In terms of processing, is synthesized initially as an inactive proenzyme, which is activated by self-cleavage at a specific serine bond to produce a beta-subunit with a hydroxyl group at its C-terminus and an alpha-subunit with a pyruvoyl group at its N-terminus.

It localises to the cytoplasm. It catalyses the reaction L-aspartate + H(+) = beta-alanine + CO2. Its pathway is cofactor biosynthesis; (R)-pantothenate biosynthesis; beta-alanine from L-aspartate: step 1/1. Functionally, catalyzes the pyruvoyl-dependent decarboxylation of aspartate to produce beta-alanine. The chain is Aspartate 1-decarboxylase from Coprothermobacter proteolyticus (strain ATCC 35245 / DSM 5265 / OCM 4 / BT).